A 189-amino-acid chain; its full sequence is Casparian strip membrane protein 2 (189 aa).

The segment at 1-21 (MKVSTIESGEISKGASSPRKG) is disordered. Topologically, residues 1-25 (MKVSTIESGEISKGASSPRKGMKRG) are cytoplasmic. Residues 26–46 (LSIMDFILRIFAAMSTLGSAL) form a helical membrane-spanning segment. At 47–73 (SMGTAKQTMPFATRFVRFKVSFHDLPT) the chain is on the extracellular side. The helical transmembrane segment at 74–94 (FLFFVTANSIVCGYLALSLVL) threads the bilayer. Over 95–108 (SFFHIVRTISVKSR) the chain is Cytoplasmic. The helical transmembrane segment at 109–129 (ILLVFLDTVMFGLLTSGASAA) threads the bilayer. Residues 130–163 (AAIVYVAHYGNPSANWFPFCQQYNSFCGRISGSL) are Extracellular-facing. Residues 164–184 (VGSFIAVVIFMILILMSGISI) form a helical membrane-spanning segment. The Cytoplasmic portion of the chain corresponds to 185-189 (SKSKH).

It belongs to the Casparian strip membrane proteins (CASP) family. In terms of assembly, homodimer and heterodimers.

It is found in the cell membrane. Its function is as follows. Regulates membrane-cell wall junctions and localized cell wall deposition. Required for establishment of the Casparian strip membrane domain (CSD) and the subsequent formation of Casparian strips, a cell wall modification of the root endodermis that determines an apoplastic barrier between the intraorganismal apoplasm and the extraorganismal apoplasm and prevents lateral diffusion. This Medicago truncatula (Barrel medic) protein is Casparian strip membrane protein 2.